A 371-amino-acid polypeptide reads, in one-letter code: Queuine tRNA-ribosyltransferase (371 aa).

Asp90 acts as the Proton acceptor in catalysis. Substrate is bound by residues 90 to 94 (DSGGF), Asp144, Gln188, and Gly215. Positions 246–252 (GVGTPED) are RNA binding. Residue Asp265 is the Nucleophile of the active site. The RNA binding; important for wobble base 34 recognition stretch occupies residues 270-274 (TRNAR). Positions 303, 305, 308, and 334 each coordinate Zn(2+).

It belongs to the queuine tRNA-ribosyltransferase family. In terms of assembly, homodimer. Within each dimer, one monomer is responsible for RNA recognition and catalysis, while the other monomer binds to the replacement base PreQ1. It depends on Zn(2+) as a cofactor.

The enzyme catalyses 7-aminomethyl-7-carbaguanine + guanosine(34) in tRNA = 7-aminomethyl-7-carbaguanosine(34) in tRNA + guanine. Its pathway is tRNA modification; tRNA-queuosine biosynthesis. Functionally, catalyzes the base-exchange of a guanine (G) residue with the queuine precursor 7-aminomethyl-7-deazaguanine (PreQ1) at position 34 (anticodon wobble position) in tRNAs with GU(N) anticodons (tRNA-Asp, -Asn, -His and -Tyr). Catalysis occurs through a double-displacement mechanism. The nucleophile active site attacks the C1' of nucleotide 34 to detach the guanine base from the RNA, forming a covalent enzyme-RNA intermediate. The proton acceptor active site deprotonates the incoming PreQ1, allowing a nucleophilic attack on the C1' of the ribose to form the product. After dissociation, two additional enzymatic reactions on the tRNA convert PreQ1 to queuine (Q), resulting in the hypermodified nucleoside queuosine (7-(((4,5-cis-dihydroxy-2-cyclopenten-1-yl)amino)methyl)-7-deazaguanosine). This is Queuine tRNA-ribosyltransferase from Neisseria meningitidis serogroup C / serotype 2a (strain ATCC 700532 / DSM 15464 / FAM18).